A 95-amino-acid chain; its full sequence is Integration host factor subunit beta (95 aa).

Belongs to the bacterial histone-like protein family. In terms of assembly, heterodimer of an alpha and a beta chain.

Its function is as follows. This protein is one of the two subunits of integration host factor, a specific DNA-binding protein that functions in genetic recombination as well as in transcriptional and translational control. In Colwellia psychrerythraea (strain 34H / ATCC BAA-681) (Vibrio psychroerythus), this protein is Integration host factor subunit beta.